The chain runs to 445 residues: Chromosome partition protein MukF (445 aa).

The interval 213-241 (LSETSSTLRELQDTLQAASDELQTQILDI) is leucine-zipper.

The protein belongs to the MukF family. Interacts, and probably forms a ternary complex, with MukE and MukB via its C-terminal region. The complex formation is stimulated by calcium or magnesium. It is required for an interaction between MukE and MukB.

The protein resides in the cytoplasm. The protein localises to the nucleoid. In terms of biological role, involved in chromosome condensation, segregation and cell cycle progression. May participate in facilitating chromosome segregation by condensation DNA from both sides of a centrally located replisome during cell division. Not required for mini-F plasmid partitioning. Probably acts via its interaction with MukB and MukE. Overexpression results in anucleate cells. It has a calcium binding activity. The chain is Chromosome partition protein MukF from Vibrio parahaemolyticus serotype O3:K6 (strain RIMD 2210633).